The sequence spans 447 residues: tRNA-2-methylthio-N(6)-dimethylallyladenosine synthase (447 aa).

The MTTase N-terminal domain maps to 10–128 (KLFCISTYGC…FPEYLHRVLQ (119 aa)). Residues Cys-19, Cys-55, Cys-89, Cys-165, Cys-169, and Cys-172 each contribute to the [4Fe-4S] cluster site. A Radical SAM core domain is found at 151–382 (RKSDVKAFVT…EAINKKVVIK (232 aa)). A TRAM domain is found at 384–447 (KEYEGKVVEV…PFSLIGEIVE (64 aa)).

The protein belongs to the methylthiotransferase family. MiaB subfamily. In terms of assembly, monomer. It depends on [4Fe-4S] cluster as a cofactor.

The protein resides in the cytoplasm. It catalyses the reaction N(6)-dimethylallyladenosine(37) in tRNA + (sulfur carrier)-SH + AH2 + 2 S-adenosyl-L-methionine = 2-methylsulfanyl-N(6)-dimethylallyladenosine(37) in tRNA + (sulfur carrier)-H + 5'-deoxyadenosine + L-methionine + A + S-adenosyl-L-homocysteine + 2 H(+). Functionally, catalyzes the methylthiolation of N6-(dimethylallyl)adenosine (i(6)A), leading to the formation of 2-methylthio-N6-(dimethylallyl)adenosine (ms(2)i(6)A) at position 37 in tRNAs that read codons beginning with uridine. In Clostridium perfringens (strain SM101 / Type A), this protein is tRNA-2-methylthio-N(6)-dimethylallyladenosine synthase.